We begin with the raw amino-acid sequence, 189 residues long: Dirigent protein 21 (189 aa).

A signal peptide spans 1-19 (MASLYLLLLLPLFLALILA). Residues N72 and N173 are each glycosylated (N-linked (GlcNAc...) asparagine).

It belongs to the plant dirigent protein family. In terms of assembly, homodimer.

It is found in the secreted. Its function is as follows. Dirigent proteins impart stereoselectivity on the phenoxy radical-coupling reaction, yielding optically active lignans from two molecules of coniferyl alcohol in the biosynthesis of lignans, flavonolignans, and alkaloids and thus plays a central role in plant secondary metabolism. In Arabidopsis thaliana (Mouse-ear cress), this protein is Dirigent protein 21 (DIR21).